The sequence spans 337 residues: Fructose-1,6-bisphosphatase class 1 (337 aa).

Mg(2+)-binding residues include Glu-94, Asp-116, Leu-118, and Asp-119. Substrate contacts are provided by residues 119–122 (DGSS), Asn-210, and Lys-276. Position 282 (Glu-282) interacts with Mg(2+).

This sequence belongs to the FBPase class 1 family. Homotetramer. It depends on Mg(2+) as a cofactor.

It localises to the cytoplasm. The catalysed reaction is beta-D-fructose 1,6-bisphosphate + H2O = beta-D-fructose 6-phosphate + phosphate. It participates in carbohydrate biosynthesis; gluconeogenesis. The protein is Fructose-1,6-bisphosphatase class 1 of Burkholderia cenocepacia (strain HI2424).